The chain runs to 323 residues: Small ribosomal subunit protein mS35 (323 aa).

Residues Pro-31–Lys-59 form a disordered region. Positions Ser-257–Asn-321 form a coiled coil.

This sequence belongs to the mitochondrion-specific ribosomal protein mS35 family. As to quaternary structure, component of the mitochondrial small ribosomal subunit (mt-SSU). Mature mammalian 55S mitochondrial ribosomes consist of a small (28S) and a large (39S) subunit. The 28S small subunit contains a 12S ribosomal RNA (12S mt-rRNA) and 30 different proteins. The 39S large subunit contains a 16S rRNA (16S mt-rRNA), a copy of mitochondrial valine transfer RNA (mt-tRNA(Val)), which plays an integral structural role, and 52 different proteins.

Its subcellular location is the mitochondrion. This is Small ribosomal subunit protein mS35 from Homo sapiens (Human).